Consider the following 873-residue polypeptide: Bifunctional uridylyltransferase/uridylyl-removing enzyme (873 aa).

Residues 1 to 332 (MKYLSPLSLS…HQGEQDDAII (332 aa)) form a uridylyltransferase region. Residues 333–692 (IDDDFQRRGR…ISKNASRGGT (360 aa)) form a uridylyl-removing region. The HD domain occupies 451–573 (VDEHSIRLLK…VRDEERLDYL (123 aa)). 2 ACT domains span residues 693–777 (EIFV…RPPR) and 800–873 (LMEF…RLSS).

The protein belongs to the GlnD family. Mg(2+) is required as a cofactor.

The enzyme catalyses [protein-PII]-L-tyrosine + UTP = [protein-PII]-uridylyl-L-tyrosine + diphosphate. It carries out the reaction [protein-PII]-uridylyl-L-tyrosine + H2O = [protein-PII]-L-tyrosine + UMP + H(+). Uridylyltransferase (UTase) activity is inhibited by glutamine, while glutamine activates uridylyl-removing (UR) activity. Modifies, by uridylylation and deuridylylation, the PII regulatory proteins (GlnB and homologs), in response to the nitrogen status of the cell that GlnD senses through the glutamine level. Under low glutamine levels, catalyzes the conversion of the PII proteins and UTP to PII-UMP and PPi, while under higher glutamine levels, GlnD hydrolyzes PII-UMP to PII and UMP (deuridylylation). Thus, controls uridylylation state and activity of the PII proteins, and plays an important role in the regulation of nitrogen assimilation and metabolism. This chain is Bifunctional uridylyltransferase/uridylyl-removing enzyme, found in Aliivibrio fischeri (strain MJ11) (Vibrio fischeri).